A 236-amino-acid polypeptide reads, in one-letter code: 2,3,4,5-tetrahydropyridine-2,6-dicarboxylate N-acetyltransferase (236 aa).

This sequence belongs to the transferase hexapeptide repeat family. DapH subfamily.

The catalysed reaction is (S)-2,3,4,5-tetrahydrodipicolinate + acetyl-CoA + H2O = L-2-acetamido-6-oxoheptanedioate + CoA. Its pathway is amino-acid biosynthesis; L-lysine biosynthesis via DAP pathway; LL-2,6-diaminopimelate from (S)-tetrahydrodipicolinate (acetylase route): step 1/3. Catalyzes the transfer of an acetyl group from acetyl-CoA to tetrahydrodipicolinate. This chain is 2,3,4,5-tetrahydropyridine-2,6-dicarboxylate N-acetyltransferase, found in Clostridium botulinum (strain Alaska E43 / Type E3).